The chain runs to 102 residues: NADH-quinone oxidoreductase subunit K (102 aa).

3 helical membrane-spanning segments follow: residues 5-25 (LGHY…GIFL), 31-51 (IVLL…FVAF), and 62-82 (VFVF…LAIL).

It belongs to the complex I subunit 4L family. NDH-1 is composed of 14 different subunits. Subunits NuoA, H, J, K, L, M, N constitute the membrane sector of the complex.

It localises to the cell inner membrane. It carries out the reaction a quinone + NADH + 5 H(+)(in) = a quinol + NAD(+) + 4 H(+)(out). NDH-1 shuttles electrons from NADH, via FMN and iron-sulfur (Fe-S) centers, to quinones in the respiratory chain. The immediate electron acceptor for the enzyme in this species is believed to be ubiquinone. Couples the redox reaction to proton translocation (for every two electrons transferred, four hydrogen ions are translocated across the cytoplasmic membrane), and thus conserves the redox energy in a proton gradient. The sequence is that of NADH-quinone oxidoreductase subunit K from Methylibium petroleiphilum (strain ATCC BAA-1232 / LMG 22953 / PM1).